The sequence spans 604 residues: MTIGSKFSLLAGTRKTDGPTEISASSPPDVETPSAEKTATASAGNKEVGINDNSSDEALPSQHVQTGVQKIQAVTLVWSKWSLVAVFCLLWLVTLANGFRQSILYSLTPYATSSFQSHSLLTVINIVSSAMVSALYIPVAKVVDVWGRAEGWLVMVGLSTLGLIMMAASKNLETYCAADVFYSVGFAGMNYILCVLAADITNLRNRGIAFAFTSSPYMITAFAGSKAAEKFLVNVNWRWGFGAFAIIFPFVASPVYFVLKVGLNRAEKQGIIQPRLRSGRTLSQNFKYYFFAFDIPGVILLAGGLTVFLLPFTLATRAPNGWKSDYIIAMIVTGFVVMVLFVLYQAYWAPQPFLKYEFLTNRTVLGACLIDATYQMSYYCWNSYFNSFLQVVCNLPVAEAGYVGSTFQVVSGVLLFMVGFAIRKTGYFRWLLFIGVPLYIFAQGLMIHFRQPNQYIGYIVMCEIFISIGGSIFVLLQQLAVLVAVDHQYVAAALAVLFISGGIGGAVGNAISGAIWTNTFLPALMRNLPESAKANAVAIYGDLRVQLSYPVNSPERIAIQESYGYAQARMLAAGTGLMALMFIWMFMVKNYNVKNMSQTKGMVF.

Positions methionine 1–serine 61 are disordered. The next 14 helical transmembrane spans lie at alanine 73–leucine 95, phenylalanine 115–isoleucine 137, alanine 149–alanine 168, alanine 178–isoleucine 200, glycine 207–glycine 224, tryptophan 237–leucine 259, tyrosine 289–proline 311, tyrosine 326–leucine 343, threonine 363–phenylalanine 385, alanine 400–isoleucine 422, tyrosine 427–phenylalanine 449, glutamine 454–leucine 476, tyrosine 489–isoleucine 511, and alanine 566–valine 588.

The protein belongs to the major facilitator superfamily.

It is found in the membrane. In terms of biological role, involved in the transport of siderophore triacestylfusarinine C and so has a role in iron homeostasis. The protein is Siderophore iron transporter mirB (mirB) of Emericella nidulans (strain FGSC A4 / ATCC 38163 / CBS 112.46 / NRRL 194 / M139) (Aspergillus nidulans).